We begin with the raw amino-acid sequence, 256 residues long: Probable galactose dehydrogenase GalD (256 aa).

NAD(+) contacts are provided by residues 20–23 (GGGS), 71–72 (DL), and Asn-98. Ser-150 serves as a coordination point for substrate. Tyr-163 serves as the catalytic Proton acceptor. NAD(+) contacts are provided by residues 163–167 (YSTAK) and Ile-196.

It belongs to the short-chain dehydrogenases/reductases (SDR) family.

Its function is as follows. Involved in the degradation of galactose via the DeLey-Doudoroff pathway. Catalyzes the oxidation of galactose in the presence of NAD(+). Uses NAD(+) as a hydrogen acceptor more efficiently than NADP(+). The chain is Probable galactose dehydrogenase GalD (galD) from Rhizobium meliloti (strain 1021) (Ensifer meliloti).